The primary structure comprises 569 residues: Proline--tRNA ligase (569 aa).

The protein belongs to the class-II aminoacyl-tRNA synthetase family. ProS type 1 subfamily. In terms of assembly, homodimer.

The protein localises to the cytoplasm. The catalysed reaction is tRNA(Pro) + L-proline + ATP = L-prolyl-tRNA(Pro) + AMP + diphosphate. Its function is as follows. Catalyzes the attachment of proline to tRNA(Pro) in a two-step reaction: proline is first activated by ATP to form Pro-AMP and then transferred to the acceptor end of tRNA(Pro). As ProRS can inadvertently accommodate and process non-cognate amino acids such as alanine and cysteine, to avoid such errors it has two additional distinct editing activities against alanine. One activity is designated as 'pretransfer' editing and involves the tRNA(Pro)-independent hydrolysis of activated Ala-AMP. The other activity is designated 'posttransfer' editing and involves deacylation of mischarged Ala-tRNA(Pro). The misacylated Cys-tRNA(Pro) is not edited by ProRS. The protein is Proline--tRNA ligase of Nitrosospira multiformis (strain ATCC 25196 / NCIMB 11849 / C 71).